Here is a 244-residue protein sequence, read N- to C-terminus: Flavin-dependent thymidylate synthase (244 aa).

A ThyX domain is found at 7 to 199; the sequence is PRVFLIASWG…PNLARLVWED (193 aa). FAD-binding positions include S60 and 83–85; that span reads RHR. Residues 80-83, 93-95, and R137 contribute to the dUMP site; these read QFIR and SQR. The short motif at 83–93 is the ThyX motif element; that stretch reads RHRMASYWSES. FAD contacts are provided by residues 153–155 and N160; that span reads NAR. DUMP is bound at residue R165. Residue R165 is the Involved in ionization of N3 of dUMP, leading to its activation of the active site.

It belongs to the thymidylate synthase ThyX family. In terms of assembly, homotetramer. FAD is required as a cofactor.

It carries out the reaction dUMP + (6R)-5,10-methylene-5,6,7,8-tetrahydrofolate + NADPH + H(+) = dTMP + (6S)-5,6,7,8-tetrahydrofolate + NADP(+). Its pathway is pyrimidine metabolism; dTTP biosynthesis. Its function is as follows. Catalyzes the reductive methylation of 2'-deoxyuridine-5'-monophosphate (dUMP) to 2'-deoxythymidine-5'-monophosphate (dTMP) while utilizing 5,10-methylenetetrahydrofolate (mTHF) as the methyl donor, and NADPH and FADH(2) as the reductant. In Pyrobaculum aerophilum (strain ATCC 51768 / DSM 7523 / JCM 9630 / CIP 104966 / NBRC 100827 / IM2), this protein is Flavin-dependent thymidylate synthase.